The primary structure comprises 311 residues: Malate dehydrogenase (311 aa).

Residues 7-13 (GAAGGIG) and Asp34 each bind NAD(+). Arg81 and Arg87 together coordinate substrate. NAD(+) contacts are provided by residues Asn94 and 117–119 (ITN). 2 residues coordinate substrate: Asn119 and Arg153. His177 serves as the catalytic Proton acceptor. Met227 is a binding site for NAD(+).

The protein belongs to the LDH/MDH superfamily. MDH type 1 family. As to quaternary structure, homodimer.

The enzyme catalyses (S)-malate + NAD(+) = oxaloacetate + NADH + H(+). Catalyzes the reversible oxidation of malate to oxaloacetate. This chain is Malate dehydrogenase, found in Haemophilus influenzae (strain 86-028NP).